The sequence spans 410 residues: Tryptophan synthase beta chain (410 aa).

Position 98 is an N6-(pyridoxal phosphate)lysine (Lys-98).

Belongs to the TrpB family. Tetramer of two alpha and two beta chains. The cofactor is pyridoxal 5'-phosphate.

The catalysed reaction is (1S,2R)-1-C-(indol-3-yl)glycerol 3-phosphate + L-serine = D-glyceraldehyde 3-phosphate + L-tryptophan + H2O. The protein operates within amino-acid biosynthesis; L-tryptophan biosynthesis; L-tryptophan from chorismate: step 5/5. In terms of biological role, the beta subunit is responsible for the synthesis of L-tryptophan from indole and L-serine. This chain is Tryptophan synthase beta chain, found in Dinoroseobacter shibae (strain DSM 16493 / NCIMB 14021 / DFL 12).